A 259-amino-acid polypeptide reads, in one-letter code: Thiazole synthase (259 aa).

The active-site Schiff-base intermediate with DXP is the Lys98. Residues Gly159, 185 to 186, and 207 to 208 contribute to the 1-deoxy-D-xylulose 5-phosphate site; these read AG and NS.

It belongs to the ThiG family. Homotetramer. Forms heterodimers with either ThiH or ThiS.

The protein localises to the cytoplasm. The catalysed reaction is [ThiS sulfur-carrier protein]-C-terminal-Gly-aminoethanethioate + 2-iminoacetate + 1-deoxy-D-xylulose 5-phosphate = [ThiS sulfur-carrier protein]-C-terminal Gly-Gly + 2-[(2R,5Z)-2-carboxy-4-methylthiazol-5(2H)-ylidene]ethyl phosphate + 2 H2O + H(+). It participates in cofactor biosynthesis; thiamine diphosphate biosynthesis. Its function is as follows. Catalyzes the rearrangement of 1-deoxy-D-xylulose 5-phosphate (DXP) to produce the thiazole phosphate moiety of thiamine. Sulfur is provided by the thiocarboxylate moiety of the carrier protein ThiS. In vitro, sulfur can be provided by H(2)S. In Chlorobium phaeobacteroides (strain BS1), this protein is Thiazole synthase.